Here is a 378-residue protein sequence, read N- to C-terminus: Flap endonuclease 1 (378 aa).

Residues 1–105 (MGIKGLNSII…HELDKRTERR (105 aa)) form an N-domain region. Aspartate 34 is a Mg(2+) binding site. Residues arginine 47 and arginine 71 each coordinate DNA. Positions 87, 156, 158, 177, and 179 each coordinate Mg(2+). The I-domain stretch occupies residues 120-251 (EIMKHERRLV…VTALKLIKEH (132 aa)). Glutamate 156 lines the DNA pocket. DNA contacts are provided by glycine 229 and aspartate 231. A Mg(2+)-binding site is contributed by aspartate 231. Residues 337-345 (VQGRLDSFF) are interaction with PCNA. A compositionally biased stretch (low complexity) spans 356–367 (AASARKAQAAKK). The disordered stretch occupies residues 356–378 (AASARKAQAAKKTNQKGKVLKRR). Positions 368-378 (TNQKGKVLKRR) are enriched in basic residues.

The protein belongs to the XPG/RAD2 endonuclease family. FEN1 subfamily. In terms of assembly, interacts with PCNA. Three molecules of FEN1 bind to one PCNA trimer with each molecule binding to one PCNA monomer. PCNA stimulates the nuclease activity without altering cleavage specificity. It depends on Mg(2+) as a cofactor. In terms of processing, phosphorylated. Phosphorylation upon DNA damage induces relocalization to the nuclear plasma.

The protein resides in the nucleus. Its subcellular location is the nucleolus. The protein localises to the nucleoplasm. It localises to the mitochondrion. Structure-specific nuclease with 5'-flap endonuclease and 5'-3' exonuclease activities involved in DNA replication and repair. During DNA replication, cleaves the 5'-overhanging flap structure that is generated by displacement synthesis when DNA polymerase encounters the 5'-end of a downstream Okazaki fragment. It enters the flap from the 5'-end and then tracks to cleave the flap base, leaving a nick for ligation. Also involved in the long patch base excision repair (LP-BER) pathway, by cleaving within the apurinic/apyrimidinic (AP) site-terminated flap. Acts as a genome stabilization factor that prevents flaps from equilibrating into structures that lead to duplications and deletions. Also possesses 5'-3' exonuclease activity on nicked or gapped double-stranded DNA, and exhibits RNase H activity. Also involved in replication and repair of rDNA and in repairing mitochondrial DNA. This is Flap endonuclease 1 from Eremothecium gossypii (strain ATCC 10895 / CBS 109.51 / FGSC 9923 / NRRL Y-1056) (Yeast).